The chain runs to 103 residues: Small ribosomal subunit protein uS10 (103 aa).

The protein belongs to the universal ribosomal protein uS10 family. As to quaternary structure, part of the 30S ribosomal subunit.

Its function is as follows. Involved in the binding of tRNA to the ribosomes. This is Small ribosomal subunit protein uS10 from Bordetella parapertussis (strain 12822 / ATCC BAA-587 / NCTC 13253).